We begin with the raw amino-acid sequence, 200 residues long: Imidazoleglycerol-phosphate dehydratase (200 aa).

Belongs to the imidazoleglycerol-phosphate dehydratase family.

It is found in the cytoplasm. It catalyses the reaction D-erythro-1-(imidazol-4-yl)glycerol 3-phosphate = 3-(imidazol-4-yl)-2-oxopropyl phosphate + H2O. The protein operates within amino-acid biosynthesis; L-histidine biosynthesis; L-histidine from 5-phospho-alpha-D-ribose 1-diphosphate: step 6/9. The chain is Imidazoleglycerol-phosphate dehydratase from Bifidobacterium animalis subsp. lactis (strain AD011).